The following is a 1234-amino-acid chain: ATP-dependent helicase/nuclease subunit A (1234 aa).

A UvrD-like helicase ATP-binding domain is found at 2–475 (TQFTTSQQAA…IILAENFRST (474 aa)). 23 to 30 (ASAGSGKT) is an ATP binding site. The region spanning 507–806 (YGALDYGDAH…KLMTIHKSKG (300 aa)) is the UvrD-like helicase C-terminal domain.

The protein belongs to the helicase family. AddA subfamily. As to quaternary structure, heterodimer of AddA and AddB/RexB. Mg(2+) serves as cofactor.

The enzyme catalyses Couples ATP hydrolysis with the unwinding of duplex DNA by translocating in the 3'-5' direction.. The catalysed reaction is ATP + H2O = ADP + phosphate + H(+). Its function is as follows. The heterodimer acts as both an ATP-dependent DNA helicase and an ATP-dependent, dual-direction single-stranded exonuclease. Recognizes the chi site generating a DNA molecule suitable for the initiation of homologous recombination. The AddA nuclease domain is required for chi fragment generation; this subunit has the helicase and 3' -&gt; 5' nuclease activities. This Lacticaseibacillus casei (strain BL23) (Lactobacillus casei) protein is ATP-dependent helicase/nuclease subunit A.